A 307-amino-acid chain; its full sequence is 4-hydroxybenzoate octaprenyltransferase (307 aa).

Helical transmembrane passes span 27–47 (AGWL…AGGF), 50–70 (WHLL…GCCI), 101–121 (LAVG…TNAL), 142–162 (CVAM…PMAF), 179–199 (AAVP…VLAY), 239–259 (LLAW…AAGL), and 285–305 (FRLN…DLGW).

This sequence belongs to the UbiA prenyltransferase family. Mg(2+) is required as a cofactor.

The protein resides in the cell inner membrane. It carries out the reaction all-trans-octaprenyl diphosphate + 4-hydroxybenzoate = 4-hydroxy-3-(all-trans-octaprenyl)benzoate + diphosphate. It participates in cofactor biosynthesis; ubiquinone biosynthesis. In terms of biological role, catalyzes the prenylation of para-hydroxybenzoate (PHB) with an all-trans polyprenyl group. Mediates the second step in the final reaction sequence of ubiquinone-8 (UQ-8) biosynthesis, which is the condensation of the polyisoprenoid side chain with PHB, generating the first membrane-bound Q intermediate 3-octaprenyl-4-hydroxybenzoate. In Methylibium petroleiphilum (strain ATCC BAA-1232 / LMG 22953 / PM1), this protein is 4-hydroxybenzoate octaprenyltransferase.